We begin with the raw amino-acid sequence, 487 residues long: 3-octaprenyl-4-hydroxybenzoate carboxy-lyase (487 aa).

A Mn(2+)-binding site is contributed by N172. Residues 175–177 (IYR), 189–191 (RWL), and 194–195 (RG) contribute to the prenylated FMN site. Mn(2+) is bound at residue E238. The Proton donor role is filled by D287.

This sequence belongs to the UbiD family. As to quaternary structure, homohexamer. Requires prenylated FMN as cofactor. Mn(2+) is required as a cofactor.

The protein localises to the cell membrane. It catalyses the reaction a 4-hydroxy-3-(all-trans-polyprenyl)benzoate + H(+) = a 2-(all-trans-polyprenyl)phenol + CO2. It functions in the pathway cofactor biosynthesis; ubiquinone biosynthesis. Catalyzes the decarboxylation of 3-octaprenyl-4-hydroxy benzoate to 2-octaprenylphenol, an intermediate step in ubiquinone biosynthesis. The protein is 3-octaprenyl-4-hydroxybenzoate carboxy-lyase of Actinobacillus pleuropneumoniae serotype 3 (strain JL03).